Reading from the N-terminus, the 268-residue chain is Ribosomal RNA small subunit methyltransferase A (268 aa).

Positions 12, 14, 38, 59, 82, and 107 each coordinate S-adenosyl-L-methionine.

It belongs to the class I-like SAM-binding methyltransferase superfamily. rRNA adenine N(6)-methyltransferase family. RsmA subfamily.

The protein localises to the cytoplasm. It catalyses the reaction adenosine(1518)/adenosine(1519) in 16S rRNA + 4 S-adenosyl-L-methionine = N(6)-dimethyladenosine(1518)/N(6)-dimethyladenosine(1519) in 16S rRNA + 4 S-adenosyl-L-homocysteine + 4 H(+). Specifically dimethylates two adjacent adenosines (A1518 and A1519) in the loop of a conserved hairpin near the 3'-end of 16S rRNA in the 30S particle. May play a critical role in biogenesis of 30S subunits. The polypeptide is Ribosomal RNA small subunit methyltransferase A (Aster yellows witches'-broom phytoplasma (strain AYWB)).